The sequence spans 201 residues: LexA repressor (201 aa).

A DNA-binding region (H-T-H motif) is located at residues 27–47 (RMEISSAFGFASPNAAEDHLK). Catalysis depends on for autocatalytic cleavage activity residues Ser116 and Lys153.

The protein belongs to the peptidase S24 family. In terms of assembly, homodimer.

The catalysed reaction is Hydrolysis of Ala-|-Gly bond in repressor LexA.. Represses a number of genes involved in the response to DNA damage (SOS response), including recA and lexA. In the presence of single-stranded DNA, RecA interacts with LexA causing an autocatalytic cleavage which disrupts the DNA-binding part of LexA, leading to derepression of the SOS regulon and eventually DNA repair. This is LexA repressor from Dechloromonas aromatica (strain RCB).